Here is a 256-residue protein sequence, read N- to C-terminus: MDKPYGYASVSMSGIDRSAGKDIDLEMGVGEATLYPGLSYGENQLRWGFIRKVYGILSAQLLLTTLISAVVVLNPPVNDLLTGSPGILLFLCIVPFILIWPLHIYHQKHPVNLILLALFTVSLSFTVGVSCAMTEGRIVLQALILTLSVVGSLTAYTFWAAKKGKDFSFLGPILFTSLIILVVTSFIQMFFPLGPTSVAVYGGFSALVFCGYIVYDTDNLIKRFTYDEYILASVALYLDILNLFLTILRILRQGDN.

A run of 7 helical transmembrane segments spans residues 53 to 73 (VYGI…VVVL), 85 to 105 (PGIL…LHIY), 113 to 133 (LILL…SCAM), 138 to 158 (IVLQ…AYTF), 167 to 187 (FSFL…TSFI), 189 to 209 (MFFP…ALVF), and 228 to 248 (EYIL…LTIL).

This sequence belongs to the BI1 family.

The protein localises to the membrane. In Arabidopsis thaliana (Mouse-ear cress), this protein is BI1-like protein.